A 197-amino-acid polypeptide reads, in one-letter code: Isopentenyl-diphosphate Delta-isomerase (197 aa).

Mn(2+) contacts are provided by histidine 41 and histidine 48. A Nudix hydrolase domain is found at 46–183; the sequence is RLHRAFSVFL…AWFMTVLDAA (138 aa). Cysteine 83 is a catalytic residue. Residue cysteine 83 coordinates Mg(2+). Histidine 85 provides a ligand contact to Mn(2+). Glutamate 103 is a binding site for Mg(2+). Mn(2+)-binding residues include glutamate 130 and glutamate 132. Residue glutamate 132 is part of the active site.

This sequence belongs to the IPP isomerase type 1 family. Mg(2+) is required as a cofactor. Requires Mn(2+) as cofactor.

Its subcellular location is the cytoplasm. The catalysed reaction is isopentenyl diphosphate = dimethylallyl diphosphate. The protein operates within isoprenoid biosynthesis; dimethylallyl diphosphate biosynthesis; dimethylallyl diphosphate from isopentenyl diphosphate: step 1/1. Catalyzes the 1,3-allylic rearrangement of the homoallylic substrate isopentenyl (IPP) to its highly electrophilic allylic isomer, dimethylallyl diphosphate (DMAPP). This Streptomyces coelicolor (strain ATCC BAA-471 / A3(2) / M145) protein is Isopentenyl-diphosphate Delta-isomerase.